A 620-amino-acid chain; its full sequence is Guanylate-binding protein 3 (620 aa).

The segment at 1 to 304 is GTPase domain (Globular); that stretch reads MEAPICLVEN…NAINSGTVPC (304 aa). The GB1/RHD3-type G domain maps to 29–271; sequence AQPLVVVAIV…FCSYIFTNGK (243 aa). GTP contacts are provided by residues 39–46, 61–63, and 91–95; these read GLYRTGKS, LGS, and DTEGL. 2 coiled-coil regions span residues 375-411 and 477-582; these read KKLV…SESL and DGER…TRRK.

It belongs to the TRAFAC class dynamin-like GTPase superfamily. GB1/RHD3 GTPase family. GB1 subfamily. In terms of assembly, heterodimer with other family members, including GBP1, GBP2 and GBP5. Dimerization regulates subcellular location. In terms of tissue distribution, brain, lung, heart, spleen, kidney, liver and intestine.

It is found in the cytoplasm. The protein localises to the perinuclear region. It localises to the golgi apparatus membrane. It catalyses the reaction GTP + H2O = GDP + phosphate + H(+). Interferon (IFN)-inducible GTPase that plays important roles in innate immunity against a diverse range of bacterial, viral and protozoan pathogens. Hydrolyzes GTP very efficiently; GDP rather than GMP is the major reaction product. Following infection, recruited to the pathogen-containing vacuoles or vacuole-escaped bacteria and acts as a positive regulator of inflammasome assembly by promoting the release of inflammasome ligands from bacteria. Acts by promoting lysis of pathogen-containing vacuoles, releasing pathogens into the cytosol. Following pathogen release in the cytosol, promotes recruitment of proteins that mediate bacterial cytolysis, such as Gm12250/Irgb10: this liberates ligands that are detected by inflammasomes, such as lipopolysaccharide (LPS) that activates the non-canonical CASP4/CASP11 inflammasome or double-stranded DNA (dsDNA) that activates the AIM2 inflammasome. May play a role in erythroid differentiation. The chain is Guanylate-binding protein 3 from Mus musculus (Mouse).